Reading from the N-terminus, the 259-residue chain is Global transcriptional regulator CodY (259 aa).

A GAF domain region spans residues 1-155 (MALLQKTRKI…GATVVGMEIL (155 aa)). Positions 203 to 222 (ASKIADRVGITRSVIVNALR) form a DNA-binding region, H-T-H motif. A Phosphoserine modification is found at serine 215.

This sequence belongs to the CodY family.

Its subcellular location is the cytoplasm. Its function is as follows. DNA-binding global transcriptional regulator which is involved in the adaptive response to starvation and acts by directly or indirectly controlling the expression of numerous genes in response to nutrient availability. During rapid exponential growth, CodY is highly active and represses genes whose products allow adaptation to nutrient depletion. This chain is Global transcriptional regulator CodY, found in Bacillus licheniformis (strain ATCC 14580 / DSM 13 / JCM 2505 / CCUG 7422 / NBRC 12200 / NCIMB 9375 / NCTC 10341 / NRRL NRS-1264 / Gibson 46).